Consider the following 271-residue polypeptide: ATP synthase subunit a (271 aa).

A run of 5 helical transmembrane segments spans residues 47–67 (WENI…AYLG), 107–127 (FLGT…VPLM), 133–153 (SLNI…FLNI), 209–229 (ILIG…ETFV), and 235–255 (LPFM…FTLL).

This sequence belongs to the ATPase A chain family. As to quaternary structure, F-type ATPases have 2 components, CF(1) - the catalytic core - and CF(0) - the membrane proton channel. CF(1) has five subunits: alpha(3), beta(3), gamma(1), delta(1), epsilon(1). CF(0) has three main subunits: a(1), b(2) and c(9-12). The alpha and beta chains form an alternating ring which encloses part of the gamma chain. CF(1) is attached to CF(0) by a central stalk formed by the gamma and epsilon chains, while a peripheral stalk is formed by the delta and b chains.

The protein localises to the cell inner membrane. Functionally, key component of the proton channel; it plays a direct role in the translocation of protons across the membrane. The sequence is that of ATP synthase subunit a from Protochlamydia amoebophila (strain UWE25).